The sequence spans 247 residues: 5'-nucleotidase SurE (247 aa).

A divalent metal cation-binding residues include Asp8, Asp9, Ser39, and Asn91.

This sequence belongs to the SurE nucleotidase family. Requires a divalent metal cation as cofactor.

The protein localises to the cytoplasm. It carries out the reaction a ribonucleoside 5'-phosphate + H2O = a ribonucleoside + phosphate. In terms of biological role, nucleotidase that shows phosphatase activity on nucleoside 5'-monophosphates. The chain is 5'-nucleotidase SurE from Methylobacillus flagellatus (strain ATCC 51484 / DSM 6875 / VKM B-1610 / KT).